The sequence spans 354 residues: Methionine import ATP-binding protein MetN (354 aa).

In terms of domain architecture, ABC transporter spans 8-250 (LDHIDITFRQ…PKEALTQEFI (243 aa)). 42–49 (GYSGAGKS) lines the ATP pocket.

Belongs to the ABC transporter superfamily. Methionine importer (TC 3.A.1.24) family. The complex is composed of two ATP-binding proteins (MetN), two transmembrane proteins (MetI) and a solute-binding protein (MetQ).

It localises to the cell membrane. It catalyses the reaction L-methionine(out) + ATP + H2O = L-methionine(in) + ADP + phosphate + H(+). It carries out the reaction D-methionine(out) + ATP + H2O = D-methionine(in) + ADP + phosphate + H(+). Part of the ABC transporter complex MetNIQ involved in methionine import. Responsible for energy coupling to the transport system. The chain is Methionine import ATP-binding protein MetN from Streptococcus pyogenes serotype M12 (strain MGAS2096).